Reading from the N-terminus, the 205-residue chain is Cytochrome c biogenesis ATP-binding export protein CcmA (205 aa).

Residues 2 to 204 (LEVSNLTAIR…SPKLRKIKLG (203 aa)) form the ABC transporter domain. 34–41 (GRNGTGKT) lines the ATP pocket.

This sequence belongs to the ABC transporter superfamily. CcmA exporter (TC 3.A.1.107) family. In terms of assembly, the complex is composed of two ATP-binding proteins (CcmA) and two transmembrane proteins (CcmB).

The protein localises to the cell inner membrane. It carries out the reaction heme b(in) + ATP + H2O = heme b(out) + ADP + phosphate + H(+). In terms of biological role, part of the ABC transporter complex CcmAB involved in the biogenesis of c-type cytochromes; once thought to export heme, this seems not to be the case, but its exact role is uncertain. Responsible for energy coupling to the transport system. The protein is Cytochrome c biogenesis ATP-binding export protein CcmA of Vibrio vulnificus (strain CMCP6).